Consider the following 720-residue polypeptide: MAPPRNVVKIAIKMRDAIPQLIQLDQAKPLAAVLKEVCDAWSLTHSERYALQFADGHRRYITENNRAEIKNGSILCLSTAPDLEAEQLLGGLQSNSPEGRREALRRLVPLASDMIFAREVISRNGLQILGTIIEDGDDLGEVLALSLRAFSELMEHGVVSWETLSIPFVRKVVCYVNMNLMDASVPPLALGLLESVTLSSPALGQLVKSEVPLDRLLVHLQVMNQQLQTKAMALLTALLQGASPVERKHMLDYLWQRNLRQFIYKNIIHSAAPMGDEMAHHLYVLQALMLGLLEPRMRTPLDPYSQEQREQLQVLRQAAFEVEGESSGAGLSADRRRSLCAREFRKLGFSNSNPAQDLERVPPGLLALDNMLYFSRNAPSAYSRFVLENSSREDKHECPFARGSIQLTVLLCELLRVGEPCSETAQDFSPMFFGQDQSFHELFCVGIQLLNKTWKEMRATQEDFDKVMQVVREQLARTLALKPTSLELFRTKVNALTYGEVLRLRQTERLHQEGTLAPPILELREKLKPELMGLIRQQRLLRLCEGTLFRKISSRRRQDKLWFCCLSPNHKLLQYGDMEEGASPPTLESLPEQLPVADMRALLTGKDCPHVREKGSGKQNKDLYELAFSISYDRGEEEAYLNFIAPSKREFYLWTDGLSALLGSPMGSEQTRLDLEQLLTMETKLRLLELENVPIPERPPPVPPPPTNFNFCYDCSIAEP.

Residues 307–479 (EQREQLQVLR…VVREQLARTL (173 aa)) enclose the ELMO domain. The region spanning 542–664 (RLCEGTLFRK…TDGLSALLGS (123 aa)) is the PH domain. The SH3-binding signature appears at 696–706 (PERPPPVPPPP).

In terms of assembly, probably interacts directly with the SH3-domain of DOCK1 via its SH3-binding site. Part of a complex with DOCK1 and RAC1. Interacts with ADGRB3.

The protein localises to the cytoplasm. In terms of biological role, involved in cytoskeletal rearrangements required for phagocytosis of apoptotic cells and cell motility. Acts in association with DOCK1 and CRK. Was initially proposed to be required in complex with DOCK1 to activate Rac Rho small GTPases. May enhance the guanine nucleotide exchange factor (GEF) activity of DOCK1. In Homo sapiens (Human), this protein is Engulfment and cell motility protein 3 (ELMO3).